The primary structure comprises 473 residues: L-seryl-tRNA(Sec) selenium transferase (473 aa).

K302 is subject to N6-(pyridoxal phosphate)lysine.

The protein belongs to the SelA family. Requires pyridoxal 5'-phosphate as cofactor.

Its subcellular location is the cytoplasm. The catalysed reaction is L-seryl-tRNA(Sec) + selenophosphate + H(+) = L-selenocysteinyl-tRNA(Sec) + phosphate. Its pathway is aminoacyl-tRNA biosynthesis; selenocysteinyl-tRNA(Sec) biosynthesis; selenocysteinyl-tRNA(Sec) from L-seryl-tRNA(Sec) (bacterial route): step 1/1. Converts seryl-tRNA(Sec) to selenocysteinyl-tRNA(Sec) required for selenoprotein biosynthesis. In Shewanella oneidensis (strain ATCC 700550 / JCM 31522 / CIP 106686 / LMG 19005 / NCIMB 14063 / MR-1), this protein is L-seryl-tRNA(Sec) selenium transferase.